The sequence spans 175 residues: Transcription factor E (175 aa).

Residues 3–88 (ENPLIQQVLF…TWKPSLEKVP (86 aa)) enclose the HTH TFE/IIEalpha-type domain.

It belongs to the TFE family. Monomer. Interaction with RNA polymerase subunits RpoF and RpoE is necessary for Tfe stimulatory transcription activity. Able to interact with Tbp and RNA polymerase in the absence of DNA promoter. Interacts both with the preinitiation and elongation complexes.

In terms of biological role, transcription factor that plays a role in the activation of archaeal genes transcribed by RNA polymerase. Facilitates transcription initiation by enhancing TATA-box recognition by TATA-box-binding protein (Tbp), and transcription factor B (Tfb) and RNA polymerase recruitment. Not absolutely required for transcription in vitro, but particularly important in cases where Tbp or Tfb function is not optimal. It dynamically alters the nucleic acid-binding properties of RNA polymerases by stabilizing the initiation complex and destabilizing elongation complexes. Seems to translocate with the RNA polymerase following initiation and acts by binding to the non template strand of the transcription bubble in elongation complexes. The polypeptide is Transcription factor E (Methanococcus maripaludis (strain DSM 14266 / JCM 13030 / NBRC 101832 / S2 / LL)).